The sequence spans 165 residues: Lithostathine-1 (165 aa).

An N-terminal signal peptide occupies residues 1-21; the sequence is MARNAYFILLSCLIVLSPSQG. Residue Q22 is modified to Pyrrolidone carboxylic acid. The region spanning 33–163 is the C-type lectin domain; it reads ISCPEGSNAY…DAQYSFVCKF (131 aa). Cystine bridges form between C35-C46, C63-C161, and C136-C153. A glycan (N-linked (GlcNAc...) asparagine) is linked at N129.

As to expression, expressed only in regenerating islets and normal exocrine pancreas, but not in normal pancreatic islets. Expressed strongly in pancreas, moderately in gall bladder, and weakly in liver.

It is found in the secreted. Might act as an inhibitor of spontaneous calcium carbonate precipitation. This is Lithostathine-1 (Reg1) from Mus musculus (Mouse).